Here is a 179-residue protein sequence, read N- to C-terminus: Probable protein archease (179 aa).

Positions 55, 178, and 179 each coordinate Ca(2+).

It belongs to the archease family.

Activates the tRNA-splicing ligase complex by facilitating the enzymatic turnover of catalytic subunit RtcB. Acts by promoting the guanylylation of RtcB, a key intermediate step in tRNA ligation. Can also alter the NTP specificity of RtcB such that ATP, dGTP or ITP is used efficiently. This is Probable protein archease from Mycobacterium tuberculosis (strain CDC 1551 / Oshkosh).